A 129-amino-acid polypeptide reads, in one-letter code: Putative membrane protein insertion efficiency factor (129 aa).

Belongs to the UPF0161 family.

It localises to the cell inner membrane. In terms of biological role, could be involved in insertion of integral membrane proteins into the membrane. This is Putative membrane protein insertion efficiency factor from Rhodopseudomonas palustris (strain TIE-1).